The chain runs to 419 residues: D-amino acid dehydrogenase (419 aa).

Residue 3 to 17 (VLILGGGVVGVTSAY) participates in FAD binding.

It belongs to the DadA oxidoreductase family. Requires FAD as cofactor.

It carries out the reaction a D-alpha-amino acid + A + H2O = a 2-oxocarboxylate + AH2 + NH4(+). It participates in amino-acid degradation; D-alanine degradation; NH(3) and pyruvate from D-alanine: step 1/1. Its function is as follows. Oxidative deamination of D-amino acids. The protein is D-amino acid dehydrogenase of Methylobacterium radiotolerans (strain ATCC 27329 / DSM 1819 / JCM 2831 / NBRC 15690 / NCIMB 10815 / 0-1).